The following is a 236-amino-acid chain: Ribonuclease PH (236 aa).

Residues Arg-86 and 124–126 (GTR) each bind phosphate.

Belongs to the RNase PH family. As to quaternary structure, homohexameric ring arranged as a trimer of dimers.

It catalyses the reaction tRNA(n+1) + phosphate = tRNA(n) + a ribonucleoside 5'-diphosphate. Its function is as follows. Phosphorolytic 3'-5' exoribonuclease that plays an important role in tRNA 3'-end maturation. Removes nucleotide residues following the 3'-CCA terminus of tRNAs; can also add nucleotides to the ends of RNA molecules by using nucleoside diphosphates as substrates, but this may not be physiologically important. Probably plays a role in initiation of 16S rRNA degradation (leading to ribosome degradation) during starvation. This chain is Ribonuclease PH, found in Thermodesulfovibrio yellowstonii (strain ATCC 51303 / DSM 11347 / YP87).